The following is a 371-amino-acid chain: Probable tRNA sulfurtransferase (371 aa).

The THUMP domain maps to 54–156 (NANIEALSEV…NEMTYFYHKV (103 aa)). ATP-binding positions include 174–175 (LF), 199–200 (NF), lysine 254, glycine 276, and glutamine 285.

It belongs to the ThiI family.

The protein localises to the cytoplasm. The enzyme catalyses [ThiI sulfur-carrier protein]-S-sulfanyl-L-cysteine + a uridine in tRNA + 2 reduced [2Fe-2S]-[ferredoxin] + ATP + H(+) = [ThiI sulfur-carrier protein]-L-cysteine + a 4-thiouridine in tRNA + 2 oxidized [2Fe-2S]-[ferredoxin] + AMP + diphosphate. It carries out the reaction [ThiS sulfur-carrier protein]-C-terminal Gly-Gly-AMP + S-sulfanyl-L-cysteinyl-[cysteine desulfurase] + AH2 = [ThiS sulfur-carrier protein]-C-terminal-Gly-aminoethanethioate + L-cysteinyl-[cysteine desulfurase] + A + AMP + 2 H(+). Its pathway is cofactor biosynthesis; thiamine diphosphate biosynthesis. Its function is as follows. Catalyzes the ATP-dependent transfer of a sulfur to tRNA to produce 4-thiouridine in position 8 of tRNAs, which functions as a near-UV photosensor. Also catalyzes the transfer of sulfur to the sulfur carrier protein ThiS, forming ThiS-thiocarboxylate. This is a step in the synthesis of thiazole, in the thiamine biosynthesis pathway. The sulfur is donated as persulfide by IscS. This Saccharolobus solfataricus (strain ATCC 35092 / DSM 1617 / JCM 11322 / P2) (Sulfolobus solfataricus) protein is Probable tRNA sulfurtransferase.